Reading from the N-terminus, the 181-residue chain is Oligoribonuclease (181 aa).

In terms of domain architecture, Exonuclease spans 8 to 171 (LIWVDLEMTG…DDIHDSIAEL (164 aa)). Y129 is a catalytic residue.

It belongs to the oligoribonuclease family.

It is found in the cytoplasm. Functionally, 3'-to-5' exoribonuclease specific for small oligoribonucleotides. The sequence is that of Oligoribonuclease from Photobacterium profundum (strain SS9).